A 77-amino-acid polypeptide reads, in one-letter code: MKLMIFTGLVLFAIVRLIEAQAENEKPCLPEYKVCTHAPGNCCSDLVCDCYGRYKSGAQIGRNCFCLQKGVIYKREN.

The N-terminal stretch at 1–20 (MKLMIFTGLVLFAIVRLIEA) is a signal peptide. Positions 21-26 (QAENEK) are excised as a propeptide.

It belongs to the neurotoxin 19 (CSTX) family. 08 (U8-Lctx) subfamily. In terms of processing, contains 4 disulfide bonds. In terms of tissue distribution, expressed by the venom gland.

It is found in the secreted. This is U8-lycotoxin-Ls1m from Lycosa singoriensis (Wolf spider).